Reading from the N-terminus, the 188-residue chain is Ribosome-recycling factor (188 aa).

This sequence belongs to the RRF family.

It localises to the cytoplasm. In terms of biological role, responsible for the release of ribosomes from messenger RNA at the termination of protein biosynthesis. May increase the efficiency of translation by recycling ribosomes from one round of translation to another. The protein is Ribosome-recycling factor of Granulibacter bethesdensis (strain ATCC BAA-1260 / CGDNIH1).